The chain runs to 121 residues: Acidic phospholipase A2 SpII RP4 (121 aa).

Disulfide bonds link Cys25–Cys114, Cys27–Cys43, Cys42–Cys94, Cys48–Cys121, Cys49–Cys87, Cys56–Cys80, and Cys74–Cys85. Positions 26, 28, and 30 each coordinate Ca(2+). His46 is an active-site residue. Asp47 lines the Ca(2+) pocket. Residue Asp88 is part of the active site.

It depends on Ca(2+) as a cofactor. In terms of tissue distribution, expressed by the venom gland.

It is found in the secreted. The catalysed reaction is a 1,2-diacyl-sn-glycero-3-phosphocholine + H2O = a 1-acyl-sn-glycero-3-phosphocholine + a fatty acid + H(+). Snake venom phospholipase A2 (PLA2) which exhibits indirect hemolysis, induces mild edema inflammation in the foot pads of mice and slightly delays anticoagulant activities. In mice, not lethal, even at the highest dose, and exhibits low to moderate myotoxicity on muscular fibers. PLA2 catalyzes the calcium-dependent hydrolysis of the 2-acyl groups in 3-sn-phosphoglycerides. This Bothrops alternatus (Urutu) protein is Acidic phospholipase A2 SpII RP4.